A 388-amino-acid chain; its full sequence is Ferrochelatase (388 aa).

Fe cation contacts are provided by histidine 196 and glutamate 277.

Belongs to the ferrochelatase family.

It is found in the cytoplasm. The catalysed reaction is heme b + 2 H(+) = protoporphyrin IX + Fe(2+). It functions in the pathway porphyrin-containing compound metabolism; protoheme biosynthesis; protoheme from protoporphyrin-IX: step 1/1. Catalyzes the ferrous insertion into protoporphyrin IX. In Nostoc punctiforme (strain ATCC 29133 / PCC 73102), this protein is Ferrochelatase.